The sequence spans 316 residues: Triplex capsid protein 2 (316 aa).

It belongs to the herpesviridae TRX2 protein family. Interacts with TRX1 and major capisd protein/MCP.

Its subcellular location is the virion. It is found in the host nucleus. Its function is as follows. Structural component of the T=16 icosahedral capsid. The capsid is composed of pentamers and hexamers of major capsid protein/MCP, which are linked together by heterotrimers called triplexes. These triplexes are formed by a single molecule of triplex protein 1/TRX1 and two copies of triplex protein 2/TRX2. Additionally, TRX1 is required for efficient transport of TRX2 to the nucleus, which is the site of capsid assembly. This is Triplex capsid protein 2 from Homo sapiens (Human).